A 296-amino-acid polypeptide reads, in one-letter code: MSYTKDNDKLYRYLFQNRAVRGEWVRLNDTFTETLNTHQYPKAVQNLLGEMLVATSLLTAIMKFEGTITVQIQGDGPLKLAVVNGNEKQQLRALARTQAEIADNASLSEMIGNGVLVISIMPNDGERYQGVIALDKPTIRECLEDYFIRSEQLQTHLVIRTGEYEGKAVAGGLLLQIMPDSTGTPEDFEHLMTLAETVKDEELFGLEAEELLFRLYHEEQVEVYPPQETEFHCGCSRGRSGNAILLLPMEEIDEMLAEKNGVIDMQCECCGTQYFFDKNAIMEFKQEADKLNQLGL.

Intrachain disulfides connect Cys233–Cys235 and Cys267–Cys270.

It belongs to the HSP33 family. In terms of processing, under oxidizing conditions two disulfide bonds are formed involving the reactive cysteines. Under reducing conditions zinc is bound to the reactive cysteines and the protein is inactive.

It is found in the cytoplasm. In terms of biological role, redox regulated molecular chaperone. Protects both thermally unfolding and oxidatively damaged proteins from irreversible aggregation. Plays an important role in the bacterial defense system toward oxidative stress. This is 33 kDa chaperonin from Actinobacillus pleuropneumoniae serotype 3 (strain JL03).